Reading from the N-terminus, the 341-residue chain is Anthranilate phosphoribosyltransferase (341 aa).

5-phospho-alpha-D-ribose 1-diphosphate is bound by residues Gly-80, 83–84, Thr-88, 90–93, 108–116, and Ser-120; these read GD, NIST, and KHGNRAVSS. Anthranilate is bound at residue Gly-80. Ser-92 provides a ligand contact to Mg(2+). Residue Asn-111 participates in anthranilate binding. Arg-166 is an anthranilate binding site. 2 residues coordinate Mg(2+): Asp-225 and Glu-226.

The protein belongs to the anthranilate phosphoribosyltransferase family. In terms of assembly, homodimer. It depends on Mg(2+) as a cofactor.

The catalysed reaction is N-(5-phospho-beta-D-ribosyl)anthranilate + diphosphate = 5-phospho-alpha-D-ribose 1-diphosphate + anthranilate. The protein operates within amino-acid biosynthesis; L-tryptophan biosynthesis; L-tryptophan from chorismate: step 2/5. In terms of biological role, catalyzes the transfer of the phosphoribosyl group of 5-phosphorylribose-1-pyrophosphate (PRPP) to anthranilate to yield N-(5'-phosphoribosyl)-anthranilate (PRA). In Brevibacillus brevis (strain 47 / JCM 6285 / NBRC 100599), this protein is Anthranilate phosphoribosyltransferase.